A 300-amino-acid chain; its full sequence is Cation-efflux pump FieF (300 aa).

A helical membrane pass occupies residues 24 to 44; it reads LLIKIFAWWYTGSVSILAALV. Residues aspartate 45 and aspartate 49 each contribute to the Zn(2+) site. Helical transmembrane passes span 82–102 and 114–134; these read AALAQSMFISGSALFLFLTSI and PGVGIGVTVIALICTIILVTF. Residues histidine 153 and aspartate 157 each coordinate Zn(2+). The next 2 helical transmembrane spans lie at 156–176 and 178–198; these read SDVMMNGAILIALGLSWYGWH and ADALFALGIGIYILYSALRMG.

Belongs to the cation diffusion facilitator (CDF) transporter (TC 2.A.4) family. FieF subfamily. In terms of assembly, homodimer.

The protein resides in the cell inner membrane. It carries out the reaction Zn(2+)(in) + H(+)(out) = Zn(2+)(out) + H(+)(in). It catalyses the reaction Cd(2+)(in) + H(+)(out) = Cd(2+)(out) + H(+)(in). The enzyme catalyses Fe(2+)(in) + H(+)(out) = Fe(2+)(out) + H(+)(in). Its function is as follows. Divalent metal cation transporter which exports Zn(2+), Cd(2+) and possibly Fe(2+). May be involved in zinc and iron detoxification by efflux. The polypeptide is Cation-efflux pump FieF (Salmonella enteritidis PT4 (strain P125109)).